The chain runs to 754 residues: Glutathione biosynthesis bifunctional protein GshAB (754 aa).

Residues 1-332 (MTLNQLLQKL…QGHALNEKIA (332 aa)) are glutamate--cysteine ligase. The region spanning 488–746 (KKILADAGFP…ITTKILDKLF (259 aa)) is the ATP-grasp domain. ATP is bound at residue 515–573 (PLIKDKQIVVKPKSTNFGLGISIFQEPASLDNYQKALEIAFAEDTSVLVEEFIPGTEYR). Residues Asp-695, Glu-716, and Asn-718 each coordinate Mg(2+). Mn(2+)-binding residues include Asp-695, Glu-716, and Asn-718.

The protein in the N-terminal section; belongs to the glutamate--cysteine ligase type 1 family. Type 2 subfamily. As to quaternary structure, monomer. It depends on Mg(2+) as a cofactor. Mn(2+) is required as a cofactor.

It carries out the reaction L-cysteine + L-glutamate + ATP = gamma-L-glutamyl-L-cysteine + ADP + phosphate + H(+). The catalysed reaction is gamma-L-glutamyl-L-cysteine + glycine + ATP = glutathione + ADP + phosphate + H(+). It participates in sulfur metabolism; glutathione biosynthesis; glutathione from L-cysteine and L-glutamate: step 1/2. It functions in the pathway sulfur metabolism; glutathione biosynthesis; glutathione from L-cysteine and L-glutamate: step 2/2. In terms of biological role, synthesizes glutathione from L-glutamate and L-cysteine via gamma-L-glutamyl-L-cysteine. This chain is Glutathione biosynthesis bifunctional protein GshAB, found in Streptococcus thermophilus (strain CNRZ 1066).